The following is a 377-amino-acid chain: Succinyl-diaminopimelate desuccinylase (377 aa).

Residue His-68 coordinates Zn(2+). Asp-70 is a catalytic residue. A Zn(2+)-binding site is contributed by Asp-101. Glu-135 (proton acceptor) is an active-site residue. The Zn(2+) site is built by Glu-136, Glu-164, and His-350.

Belongs to the peptidase M20A family. DapE subfamily. As to quaternary structure, homodimer. Requires Zn(2+) as cofactor. Co(2+) serves as cofactor.

The enzyme catalyses N-succinyl-(2S,6S)-2,6-diaminopimelate + H2O = (2S,6S)-2,6-diaminopimelate + succinate. It participates in amino-acid biosynthesis; L-lysine biosynthesis via DAP pathway; LL-2,6-diaminopimelate from (S)-tetrahydrodipicolinate (succinylase route): step 3/3. In terms of biological role, catalyzes the hydrolysis of N-succinyl-L,L-diaminopimelic acid (SDAP), forming succinate and LL-2,6-diaminopimelate (DAP), an intermediate involved in the bacterial biosynthesis of lysine and meso-diaminopimelic acid, an essential component of bacterial cell walls. This chain is Succinyl-diaminopimelate desuccinylase, found in Aliivibrio fischeri (strain ATCC 700601 / ES114) (Vibrio fischeri).